The chain runs to 163 residues: Regulator of chromosome segregation (163 aa).

Interacts with CpsD and ParB.

The protein localises to the cytoplasm. It is found in the nucleoid. The protein resides in the cell membrane. Required for cell division and chromosome segregation. Binds to DNA and is involved in segregating the origin of replication (oriC) region to new daughter cells. When the nucleoid is not properly segregated, involved in blocking the cell division to protect the nucleoid against premature truncation by the newly forming septum, a function which is dependent on CpsD and its autophosphorylation level. The protein is Regulator of chromosome segregation of Streptococcus pneumoniae serotype 2 (strain D39 / NCTC 7466).